The following is a 370-amino-acid chain: Phosphoserine aminotransferase (370 aa).

An N-acetylmethionine modification is found at methionine 1. 2 residues coordinate O-phospho-L-serine: histidine 44 and arginine 45. Position 51 is an N6-acetyllysine (lysine 51). Pyridoxal 5'-phosphate is bound by residues glycine 79 and tryptophan 107. Lysine 127 carries the post-translational modification N6-acetyllysine. The pyridoxal 5'-phosphate site is built by threonine 156, aspartate 176, and glutamine 199. At lysine 200 the chain carries N6-(pyridoxal phosphate)lysine. Pyridoxal 5'-phosphate is bound by residues asparagine 241 and threonine 242. N6-acetyllysine occurs at positions 269, 318, and 323. Residue serine 331 is modified to Phosphoserine. Position 333 is an N6-acetyllysine (lysine 333). O-phospho-L-serine-binding residues include histidine 335, arginine 336, and arginine 342.

The protein belongs to the class-V pyridoxal-phosphate-dependent aminotransferase family. SerC subfamily. In terms of assembly, homodimer. Pyridoxal 5'-phosphate serves as cofactor.

It carries out the reaction O-phospho-L-serine + 2-oxoglutarate = 3-phosphooxypyruvate + L-glutamate. Its pathway is amino-acid biosynthesis; L-serine biosynthesis; L-serine from 3-phospho-D-glycerate: step 2/3. Functionally, involved in L-serine biosynthesis via the phosphorylated pathway, a three-step pathway converting the glycolytic intermediate 3-phospho-D-glycerate into L-serine. Catalyzes the second step, that is the pyridoxal 5'-phosphate-dependent transamination of 3-phosphohydroxypyruvate and L-glutamate to O-phosphoserine (OPS) and alpha-ketoglutarate. In Mus musculus (Mouse), this protein is Phosphoserine aminotransferase.